Reading from the N-terminus, the 555-residue chain is Urocanate hydratase (555 aa).

NAD(+) contacts are provided by residues 53–54 (GG), Gln-131, 177–179 (GMG), Glu-197, Arg-202, 243–244 (NA), 264–268 (QTSAH), 274–275 (YL), and Tyr-323. The active site involves Cys-411. Gly-493 serves as a coordination point for NAD(+).

It belongs to the urocanase family. The cofactor is NAD(+).

It localises to the cytoplasm. The catalysed reaction is 4-imidazolone-5-propanoate = trans-urocanate + H2O. The protein operates within amino-acid degradation; L-histidine degradation into L-glutamate; N-formimidoyl-L-glutamate from L-histidine: step 2/3. In terms of biological role, catalyzes the conversion of urocanate to 4-imidazolone-5-propionate. The polypeptide is Urocanate hydratase (Maricaulis maris (strain MCS10) (Caulobacter maris)).